Here is a 306-residue protein sequence, read N- to C-terminus: Stimulator of interferon genes protein 5 (306 aa).

Positions Met1–Gln50 are disordered. The 2',3'-cGAMP site is built by Tyr119, Arg180, and Arg186.

Belongs to the STING family.

In terms of biological role, facilitator of innate immune signaling that acts as a sensor of second messenger signals produced by cyclic GMP-AMP synthase-like receptors (cGLRs) and promotes the production of type I interferon. Innate immune response is triggered in response to nucleotides from viruses and bacteria delivered to the cytoplasm. Acts by binding cyclic dinucleotides: recognizes and binds 2'-3' linked cGAMP (2'-3'-cGAMP), a second messengers produced by cGLRs in response to nucleotides in the cytosol, such as double-stranded RNA (dsRNA). Upon binding to 2'-3'-cGAMP, oligomerizes and promotes the recruitment and subsequent activation of the transcription factor IRF3 to induce expression of type I interferon. This is Stimulator of interferon genes protein 5 from Stylophora pistillata (Smooth cauliflower coral).